The following is a 325-amino-acid chain: HTH-type transcriptional regulator VqsM (325 aa).

An HTH araC/xylS-type domain is found at Gln-226–Ser-323. 2 DNA-binding regions (H-T-H motif) span residues Val-243 to Gly-264 and Val-290 to Thr-313.

Functionally, transcriptional regulator involved in both the repression (at least 99 genes, such as mexR and algU) and in the activation (at least 203 genes, such as mvfR, rsaL, vqsR and rpoS) of regulatory or putative regulatory proteins which are implicated in quorum sensing, virulence and multidrug resistance. In Pseudomonas aeruginosa (strain ATCC 15692 / DSM 22644 / CIP 104116 / JCM 14847 / LMG 12228 / 1C / PRS 101 / PAO1), this protein is HTH-type transcriptional regulator VqsM (vqsM).